Consider the following 918-residue polypeptide: Interleukin-6 receptor subunit beta (918 aa).

A signal peptide spans 1–22 (MLTLQTWLVQALFIFLTTESTG). Topologically, residues 23-619 (ELLDPCGYIS…TPKFAQGEIE (597 aa)) are extracellular. The Ig-like C2-type domain occupies 26 to 120 (DPCGYISPES…LEQNVYGITI (95 aa)). Disulfide bonds link C28/C54 and C48/C103. Residues N43, N83, and N131 are each glycosylated (N-linked (GlcNAc...) asparagine). Fibronectin type-III domains follow at residues 125-216 (PPEK…NFDP), 224-324 (PPHN…TYED), 329-424 (APSF…FQAT), 426-517 (PVMD…LKQA), and 518-613 (PPSK…TPKF). Cysteines 134 and 144 form a disulfide. N157 carries an N-linked (GlcNAc...) asparagine glycan. An intrachain disulfide couples C172 to C182. N227 carries an N-linked (GlcNAc...) asparagine glycan. Residues 310–314 (WSDWS) carry the WSXWS motif motif. Residues N379 and N383 are each glycosylated (N-linked (GlcNAc...) asparagine). The N-linked (GlcNAc...) (complex) asparagine glycan is linked to N390. C458 and C466 are oxidised to a cystine. Residues N553 and N564 are each glycosylated (N-linked (GlcNAc...) asparagine). Residues 620-641 (AIVVPVCLAFLLTTLLGVLFCF) traverse the membrane as a helical segment. Residues 642–918 (NKRDLIKKHI…TVRQGGYMPQ (277 aa)) are Cytoplasmic-facing. Positions 651-659 (IWPNVPDPS) match the Box 1 motif motif. Disordered regions lie at residues 660–681 (KSHIAQWSPHTPPRHNFNSKDQ) and 722–758 (EGHSSGIGGSSCMSSSRPSISSSDENESSQNTSSTVQ). 2 positions are modified to phosphoserine: S661 and S667. The segment covering 731-755 (SSCMSSSRPSISSSDENESSQNTSS) has biased composition (low complexity). Residues S782, S789, S829, and S839 each carry the phosphoserine modification.

It belongs to the type I cytokine receptor family. Type 2 subfamily. As to quaternary structure, component of a hexamer of two molecules each of IL6, IL6R and IL6ST; associates with the complex IL6:IL6R but does not interact with IL6. Forms heterodimers composed of LIFR and IL6ST (type I OSM receptor) which are activated by LIF and OSM. Also forms heterodimers composed of OSMR and IL6ST (type II receptor) which are activated by OSM but not by LIF. Component of a receptor complex composed of IL6ST/GP130, IL27RA/WSX1 and CNTFR which interacts with the neuroprotective peptide humanin. Interacts with HCK. Interacts with INPP5D/SHIP1. Interacts with SRC and YES. Interacts with ARMH4; this interaction prevents IL6ST protein homodimerization and bridges ARMH4 with IL6R and STAT3 and therefore inhibits phosphorylation of STAT3 at 'Tyr-705'. In terms of assembly, (Microbial infection) The homodimer binds two molecules of herpes virus 8/HHV-8 protein vIL-6. Phosphorylation of Ser-782 down-regulates cell surface expression. In terms of processing, heavily N-glycosylated. Glycosylation is required for protein stability and localization in plasma membrane but not for ligand binding. Found in all the tissues and cell lines examined. Expression not restricted to IL6 responsive cells. As to expression, expressed in blood serum (at protein level).

The protein localises to the cell membrane. It localises to the secreted. Functionally, signal-transducing molecule. The receptor systems for IL6, LIF, OSM, CNTF, IL11, CTF1 and BSF3 can utilize IL6ST for initiating signal transmission. Binding of IL6 to IL6R induces IL6ST homodimerization and formation of a high-affinity receptor complex, which activates the intracellular JAK-MAPK and JAK-STAT3 signaling pathways. That causes phosphorylation of IL6ST tyrosine residues which in turn activates STAT3. In parallel, the IL6 signaling pathway induces the expression of two cytokine receptor signaling inhibitors, SOCS1 and SOCS3, which inhibit JAK and terminate the activity of the IL6 signaling pathway as a negative feedback loop. Also activates the yes-associated protein 1 (YAP) and NOTCH pathways to control inflammation-induced epithelial regeneration, independently of STAT3. Acts as a receptor for the neuroprotective peptide humanin as part of a complex with IL27RA/WSX1 and CNTFR. Mediates signals which regulate immune response, hematopoiesis, pain control and bone metabolism. Has a role in embryonic development. Essential for survival of motor and sensory neurons and for differentiation of astrocytes. Required for expression of TRPA1 in nociceptive neurons. Required for the maintenance of PTH1R expression in the osteoblast lineage and for the stimulation of PTH-induced osteoblast differentiation. Required for normal trabecular bone mass and cortical bone composition. Binds to the soluble IL6:sIL6R complex (hyper-IL6), thereby blocking IL6 trans-signaling. Inhibits sIL6R-dependent acute phase response. Also blocks IL11 cluster signaling through IL11R. This is Interleukin-6 receptor subunit beta from Homo sapiens (Human).